A 422-amino-acid chain; its full sequence is MNGKQQVTKKPSTEEDLSFTKFKVVPDVGLKSSQFEFVLGMPINQCIAMIQQHPRMLTKVELKYSKKDPFYQDIIIYIGSTGIRLYFDGLSQLIKLIEVDNLSMITLTYNDTIFSDPNNMATLDRVNEFFGSTHPGSYDDKHNIYVQSWPGLSFCFPYGGENSNLEVRPGFGGNLRSLKYDANSQPKLTKMSIYRGPNPSEPESVDTPFSCYCGQNRTRKVEAIWENGNIVGIDIQFDTQNGRIVDGEYDVSTYTRQIYFGDSVSDVQSILGAPTKVFYKSDDKMKIHRGLHKETLYGPPNFFFNYFVMGLDILFDFVSKRVVKFVLHTNAPGHCDFGMYSRCNFSIFLNDKQYEIRTDSKFDEFSHAFMNDSNPPRPVVLARQEQQPFGSTFCYGIKQIIVERTENGFLTSVTIYDGAKEK.

It belongs to the PHAF1 family.

It is found in the cytoplasm. It localises to the preautophagosomal structure. Functionally, may play a regulatory role in autophagic activity. The protein is PHAF1 protein T01G9.2 of Caenorhabditis elegans.